A 139-amino-acid chain; its full sequence is UPF0102 protein Caul_0175 (139 aa).

The protein belongs to the UPF0102 family.

The protein is UPF0102 protein Caul_0175 of Caulobacter sp. (strain K31).